The chain runs to 34 residues: Photosystem II reaction center protein M (34 aa).

The helical transmembrane segment at 5-25 threads the bilayer; it reads ILAFIATALFVLIPTAFLIIL.

It belongs to the PsbM family. As to quaternary structure, PSII is composed of 1 copy each of membrane proteins PsbA, PsbB, PsbC, PsbD, PsbE, PsbF, PsbH, PsbI, PsbJ, PsbK, PsbL, PsbM, PsbT, PsbX, PsbY, PsbZ, Psb30/Ycf12, at least 3 peripheral proteins of the oxygen-evolving complex and a large number of cofactors. It forms dimeric complexes.

It localises to the plastid. Its subcellular location is the chloroplast thylakoid membrane. One of the components of the core complex of photosystem II (PSII). PSII is a light-driven water:plastoquinone oxidoreductase that uses light energy to abstract electrons from H(2)O, generating O(2) and a proton gradient subsequently used for ATP formation. It consists of a core antenna complex that captures photons, and an electron transfer chain that converts photonic excitation into a charge separation. This subunit is found at the monomer-monomer interface. The polypeptide is Photosystem II reaction center protein M (Zygnema circumcarinatum (Green alga)).